Consider the following 294-residue polypeptide: N-acetylmuramic acid 6-phosphate etherase (294 aa).

Positions 54–217 (TIHSFKSNGR…STASMIGVGK (164 aa)) constitute an SIS domain. Glu-82 (proton donor) is an active-site residue. The active site involves Glu-113.

The protein belongs to the GCKR-like family. MurNAc-6-P etherase subfamily. Homodimer.

It carries out the reaction N-acetyl-D-muramate 6-phosphate + H2O = N-acetyl-D-glucosamine 6-phosphate + (R)-lactate. Its pathway is amino-sugar metabolism; N-acetylmuramate degradation. Functionally, specifically catalyzes the cleavage of the D-lactyl ether substituent of MurNAc 6-phosphate, producing GlcNAc 6-phosphate and D-lactate. The chain is N-acetylmuramic acid 6-phosphate etherase from Oceanobacillus iheyensis (strain DSM 14371 / CIP 107618 / JCM 11309 / KCTC 3954 / HTE831).